The sequence spans 223 residues: MRILANLILLGVLFGVCLCQGCGDSDDDGQDDCTGDCGDGDFDGVDDCTGNCGDSDGDGYDDCNDDDSQGAYTYPYGRYLYGRRFGLRRFGNPFFRFRRFGFGPVGGLNFRLGGFGYPYGGYGNLLSRFRGYGGYGNLLGGIRGYGNVLGGYGNVLGGYGNMLGGYGNILGGYGNMLGGYGNLGGYRGYGYQLRGYGGYGSFPDNYGRYSVGSYLRRRRRKKY.

An N-terminal signal peptide occupies residues 1–19; the sequence is MRILANLILLGVLFGVCLC.

Prismatic layer of shell (at protein level).

The protein localises to the secreted. This is Shematrin-like protein 2 from Margaritifera margaritifera (Freshwater pearl mussel).